Here is a 285-residue protein sequence, read N- to C-terminus: Pseudouridine-5'-phosphate glycosidase (285 aa).

The active-site Proton donor is Glu17. Lys77 and Val97 together coordinate substrate. Asp126 contributes to the Mn(2+) binding site. 128–130 contacts substrate; the sequence is SQD. The active-site Nucleophile is the Lys147.

It belongs to the pseudouridine-5'-phosphate glycosidase family. In terms of assembly, homotrimer. Mn(2+) serves as cofactor.

The enzyme catalyses D-ribose 5-phosphate + uracil = psi-UMP + H2O. Functionally, catalyzes the reversible cleavage of pseudouridine 5'-phosphate (PsiMP) to ribose 5-phosphate and uracil. Functions biologically in the cleavage direction, as part of a pseudouridine degradation pathway. The chain is Pseudouridine-5'-phosphate glycosidase from Thermotoga sp. (strain RQ2).